The sequence spans 308 residues: tRNA dimethylallyltransferase (308 aa).

ATP is bound at residue 14–21 (GPTASGKT). Residue 16–21 (TASGKT) coordinates substrate. 3 interaction with substrate tRNA regions span residues 39–42 (DSAL), 163–167 (QRLSR), and 244–249 (RCVGYR).

This sequence belongs to the IPP transferase family. In terms of assembly, monomer. Mg(2+) serves as cofactor.

The catalysed reaction is adenosine(37) in tRNA + dimethylallyl diphosphate = N(6)-dimethylallyladenosine(37) in tRNA + diphosphate. In terms of biological role, catalyzes the transfer of a dimethylallyl group onto the adenine at position 37 in tRNAs that read codons beginning with uridine, leading to the formation of N6-(dimethylallyl)adenosine (i(6)A). The chain is tRNA dimethylallyltransferase from Shewanella oneidensis (strain ATCC 700550 / JCM 31522 / CIP 106686 / LMG 19005 / NCIMB 14063 / MR-1).